A 715-amino-acid chain; its full sequence is ATP-dependent zinc metalloprotease FtsH (715 aa).

At 1 to 10 (MKNKNRGFFR) the chain is on the cytoplasmic side. A helical membrane pass occupies residues 11-31 (SSLSYAFVILAVIFLIYSFFG). Over 32–137 (RSDGSVKHLS…KPAASNFWGS (106 aa)) the chain is Extracellular. A helical membrane pass occupies residues 138–158 (MLTLILPTLIMFALLYWMLIG). Residues 159–715 (SQRGQGGSGG…LLDAVNNKFD (557 aa)) are Cytoplasmic-facing. The interval 167–187 (GGPGGIMSFGRSKAKPADPKQ) is disordered. Residue 233–240 (GPPGTGKT) participates in ATP binding. Zn(2+) is bound at residue histidine 455. The active site involves glutamate 456. Zn(2+) is bound by residues histidine 459 and aspartate 531.

It in the central section; belongs to the AAA ATPase family. The protein in the C-terminal section; belongs to the peptidase M41 family. As to quaternary structure, homohexamer. Zn(2+) serves as cofactor.

It is found in the cell membrane. Functionally, acts as a processive, ATP-dependent zinc metallopeptidase for both cytoplasmic and membrane proteins. Plays a role in the quality control of integral membrane proteins. In terms of biological role, can complement an E.coli ftsH disruption mutant. The chain is ATP-dependent zinc metalloprotease FtsH from Oenococcus oeni (Leuconostoc oenos).